A 185-amino-acid chain; its full sequence is Ribosome-recycling factor (185 aa).

It belongs to the RRF family.

It is found in the cytoplasm. Functionally, responsible for the release of ribosomes from messenger RNA at the termination of protein biosynthesis. May increase the efficiency of translation by recycling ribosomes from one round of translation to another. This chain is Ribosome-recycling factor, found in Corynebacterium glutamicum (strain ATCC 13032 / DSM 20300 / JCM 1318 / BCRC 11384 / CCUG 27702 / LMG 3730 / NBRC 12168 / NCIMB 10025 / NRRL B-2784 / 534).